Reading from the N-terminus, the 153-residue chain is Large ribosomal subunit protein uL13 (153 aa).

This sequence belongs to the universal ribosomal protein uL13 family. In terms of assembly, part of the 50S ribosomal subunit.

This protein is one of the early assembly proteins of the 50S ribosomal subunit, although it is not seen to bind rRNA by itself. It is important during the early stages of 50S assembly. The polypeptide is Large ribosomal subunit protein uL13 (Chelativorans sp. (strain BNC1)).